The following is a 248-amino-acid chain: Ribosomal RNA small subunit methyltransferase G (248 aa).

Residues glycine 85, phenylalanine 90, 108-110 (DSS), 137-138 (AE), and arginine 156 contribute to the S-adenosyl-L-methionine site.

Belongs to the methyltransferase superfamily. RNA methyltransferase RsmG family.

The protein resides in the cytoplasm. Specifically methylates the N7 position of a guanine in 16S rRNA. In Prochlorococcus marinus (strain NATL2A), this protein is Ribosomal RNA small subunit methyltransferase G.